The primary structure comprises 111 residues: Iron-sulfur cluster insertion protein ErpA (111 aa).

Iron-sulfur cluster is bound by residues C39, C103, and C105.

It belongs to the HesB/IscA family. In terms of assembly, homodimer. Iron-sulfur cluster is required as a cofactor.

Its function is as follows. Required for insertion of 4Fe-4S clusters for at least IspG. The polypeptide is Iron-sulfur cluster insertion protein ErpA (Acinetobacter baumannii (strain AB307-0294)).